Consider the following 80-residue polypeptide: Large ribosomal subunit protein bL31B (80 aa).

It belongs to the bacterial ribosomal protein bL31 family. Type B subfamily. As to quaternary structure, part of the 50S ribosomal subunit.

This is Large ribosomal subunit protein bL31B from Streptococcus pneumoniae serotype 2 (strain D39 / NCTC 7466).